The chain runs to 475 residues: Ribulose bisphosphate carboxylase large chain (475 aa).

A propeptide spanning residues Met1–Ser2 is cleaved from the precursor. The residue at position 3 (Pro3) is an N-acetylproline. Position 14 is an N6,N6,N6-trimethyllysine (Lys14). Residues Asn123 and Thr173 each coordinate substrate. The active-site Proton acceptor is Lys175. Substrate is bound at residue Lys177. Mg(2+) is bound by residues Lys201, Asp203, and Glu204. Lys201 is subject to N6-carboxylysine. Catalysis depends on His294, which acts as the Proton acceptor. Residues Arg295, His327, and Ser379 each contribute to the substrate site.

It belongs to the RuBisCO large chain family. Type I subfamily. In terms of assembly, heterohexadecamer of 8 large chains and 8 small chains; disulfide-linked. The disulfide link is formed within the large subunit homodimers. Mg(2+) serves as cofactor. In terms of processing, the disulfide bond which can form in the large chain dimeric partners within the hexadecamer appears to be associated with oxidative stress and protein turnover.

Its subcellular location is the plastid. It is found in the chloroplast. The catalysed reaction is 2 (2R)-3-phosphoglycerate + 2 H(+) = D-ribulose 1,5-bisphosphate + CO2 + H2O. It carries out the reaction D-ribulose 1,5-bisphosphate + O2 = 2-phosphoglycolate + (2R)-3-phosphoglycerate + 2 H(+). Functionally, ruBisCO catalyzes two reactions: the carboxylation of D-ribulose 1,5-bisphosphate, the primary event in carbon dioxide fixation, as well as the oxidative fragmentation of the pentose substrate in the photorespiration process. Both reactions occur simultaneously and in competition at the same active site. The protein is Ribulose bisphosphate carboxylase large chain of Piper cenocladum (Ant piper).